The primary structure comprises 277 residues: Small ribosomal subunit protein mS23 (277 aa).

Disordered stretches follow at residues 48-85 (APSH…KKPS) and 232-277 (LAAF…GPPI). Residues 244 to 269 (ESGESEDEIPLIEEEDAIGASEESET) show a composition bias toward acidic residues.

The protein belongs to the mitochondrion-specific ribosomal protein mS23 family. As to quaternary structure, component of the mitochondrial small ribosomal subunit.

The protein localises to the mitochondrion. In Ajellomyces capsulatus (strain NAm1 / WU24) (Darling's disease fungus), this protein is Small ribosomal subunit protein mS23 (RSM25).